Consider the following 371-residue polypeptide: D-erythrose-4-phosphate dehydrogenase (371 aa).

NAD(+) is bound at residue Arg-12 to Ile-13. Residues Ser-154–Thr-156, Arg-200, Thr-213–Lys-214, and Arg-236 each bind substrate. The Nucleophile role is filled by Cys-155. An NAD(+)-binding site is contributed by Asn-318.

It belongs to the glyceraldehyde-3-phosphate dehydrogenase family. Epd subfamily. As to quaternary structure, homotetramer.

The protein resides in the cytoplasm. The catalysed reaction is D-erythrose 4-phosphate + NAD(+) + H2O = 4-phospho-D-erythronate + NADH + 2 H(+). Its pathway is cofactor biosynthesis; pyridoxine 5'-phosphate biosynthesis; pyridoxine 5'-phosphate from D-erythrose 4-phosphate: step 1/5. Catalyzes the NAD-dependent conversion of D-erythrose 4-phosphate to 4-phosphoerythronate. The chain is D-erythrose-4-phosphate dehydrogenase from Psychromonas ingrahamii (strain DSM 17664 / CCUG 51855 / 37).